A 662-amino-acid chain; its full sequence is ATP-dependent zinc metalloprotease YME1 homolog (662 aa).

Residue 206-213 (GPPGVGKT) coordinates ATP. His-425 lines the Zn(2+) pocket. Glu-426 is a catalytic residue. The Zn(2+) site is built by His-429 and Asp-503.

It in the N-terminal section; belongs to the AAA ATPase family. The protein in the C-terminal section; belongs to the peptidase M41 family. Zn(2+) is required as a cofactor.

Functionally, putative ATP-dependent protease. This Schistosoma mansoni (Blood fluke) protein is ATP-dependent zinc metalloprotease YME1 homolog.